The primary structure comprises 631 residues: Transcription factor dibT (631 aa).

Residues 11–38 (CWTCRLRRKRCDSVQPVCGSCQSLEITC) constitute a DNA-binding region (zn(2)-C6 fungal-type). The span at 123–144 (SLADSSASTPSTSSGRPTTLRS) shows a compositional bias: low complexity. 2 disordered regions span residues 123–148 (SLAD…SVDR) and 469–488 (GLKD…TSAG).

It is found in the nucleus. Its function is as follows. Transcription factor; part of the gene cluster that mediates the biosynthesis of pestalotiollide B which is part of dibenzodioxocinones, a novel class of inhibitors against cholesterol ester transfer protein (CEPT). Acts as the key transcription factor within the cluster and positively regulates the expression of the cluster genes and the subsequent production of dibenzodioxocinones such as pestalotiollide B, pestalotiollide C, 1',2'-dehydropenicillide, 3'-methoxy-1',2'-dehydropenicillide and 1',2'-epoxy-3',4'-didehydropenicillide. Required for the expression of most PKS genes outside of the dibenzodioxocinones cluster, (43 out of 48 defined PKS genes), and promotes pigmentation of the mycelium and conidia. This chain is Transcription factor dibT, found in Pestalotiopsis microspora.